A 445-amino-acid polypeptide reads, in one-letter code: tRNA-2-methylthio-N(6)-dimethylallyladenosine synthase (445 aa).

The 116-residue stretch at 2–117 folds into the MTTase N-terminal domain; it reads QGLYIKSYGC…LPELIVKARK (116 aa). [4Fe-4S] cluster-binding residues include Cys-11, Cys-47, Cys-80, Cys-157, Cys-161, and Cys-164. The Radical SAM core domain occupies 143-374; the sequence is KNQKVSAFIS…QELVHKQQLE (232 aa). The 65-residue stretch at 377–441 folds into the TRAM domain; it reads KKMIGETHPV…KNHLTGIIPH (65 aa).

Belongs to the methylthiotransferase family. MiaB subfamily. Monomer. Requires [4Fe-4S] cluster as cofactor.

The protein localises to the cytoplasm. The enzyme catalyses N(6)-dimethylallyladenosine(37) in tRNA + (sulfur carrier)-SH + AH2 + 2 S-adenosyl-L-methionine = 2-methylsulfanyl-N(6)-dimethylallyladenosine(37) in tRNA + (sulfur carrier)-H + 5'-deoxyadenosine + L-methionine + A + S-adenosyl-L-homocysteine + 2 H(+). Functionally, catalyzes the methylthiolation of N6-(dimethylallyl)adenosine (i(6)A), leading to the formation of 2-methylthio-N6-(dimethylallyl)adenosine (ms(2)i(6)A) at position 37 in tRNAs that read codons beginning with uridine. This Ehrlichia ruminantium (strain Gardel) protein is tRNA-2-methylthio-N(6)-dimethylallyladenosine synthase.